The chain runs to 343 residues: F17b-G fimbrial adhesin (343 aa).

The first 22 residues, 1-22 (MTNFYKVFLAVFILVCCNISHA), serve as a signal peptide directing secretion. Residues 23 to 199 (VVSFIGSTEN…LNPFTLNDTV (177 aa)) form a receptor-binding lectin domain region. Residues 65 to 66 (AN), 110 to 111 (DT), and 138 to 141 (STQG) each bind a carbohydrate. Cysteines 75 and 132 form a disulfide. A fimbrillin-binding domain region spans residues 200–343 (TSCRLLTPSA…GISTFTFSYQ (144 aa)). A disordered region spans residues 287–307 (LKFGPDSPVKGNENQWQLSTG). Residues 298-307 (NENQWQLSTG) are compositionally biased toward polar residues.

The protein belongs to the fimbrial protein family.

It localises to the fimbrium. Functionally, essential fimbrial adhesion factor that mediates binding to N-acetylglucosamine-containing receptors in the host intestinal microvilli, leading to colonization of the intestinal tissue, and diarrhea or septicemia. Also confers adhesiveness to laminin and basement membranes. This Escherichia coli protein is F17b-G fimbrial adhesin (f17bG).